A 44-amino-acid chain; its full sequence is Mu-conotoxin-like Cal 12.1.2f (44 aa).

Disulfide bonds link Cys-3-Cys-15, Cys-10-Cys-27, Cys-17-Cys-32, and Cys-26-Cys-38. The residue at position 16 (Trp-16) is a 6'-bromotryptophan. Pro-22 is modified (4-hydroxyproline). 6'-bromotryptophan is present on residues Trp-36 and Trp-37. Position 39 is a 4-hydroxyproline (Pro-39). 6'-bromotryptophan is present on Trp-43.

In terms of tissue distribution, expressed by the venom duct.

It localises to the secreted. Functionally, mu-conotoxins block voltage-gated sodium channels. This toxin reversibly blocks voltage-gated sodium channel in cephalopods, with no alteration in the voltage dependence of sodium conductance or on the kinetics of inactivation. The polypeptide is Mu-conotoxin-like Cal 12.1.2f (Californiconus californicus (California cone)).